Consider the following 375-residue polypeptide: 23S rRNA (uracil(747)-C(5))-methyltransferase RlmC (375 aa).

Positions 3, 11, 14, and 87 each coordinate [4Fe-4S] cluster. S-adenosyl-L-methionine-binding residues include Q212, F241, E262, and N307. Catalysis depends on C334, which acts as the Nucleophile.

This sequence belongs to the class I-like SAM-binding methyltransferase superfamily. RNA M5U methyltransferase family. RlmC subfamily.

The catalysed reaction is uridine(747) in 23S rRNA + S-adenosyl-L-methionine = 5-methyluridine(747) in 23S rRNA + S-adenosyl-L-homocysteine + H(+). In terms of biological role, catalyzes the formation of 5-methyl-uridine at position 747 (m5U747) in 23S rRNA. This chain is 23S rRNA (uracil(747)-C(5))-methyltransferase RlmC, found in Shigella sonnei (strain Ss046).